Here is a 295-residue protein sequence, read N- to C-terminus: Probable WRKY transcription factor 46 (295 aa).

The segment at residues 98–166 is a DNA-binding region (WRKY); that stretch reads QENGSIDDGH…YLGNHTCNNI (69 aa).

Belongs to the WRKY group III family. Binds to BZR2/BES1 to cooperatively regulate the expression of target genes. Phosphorylated and destabilized by ASK7/BIN2. Expressed in guard cells, hypocotyls, and in the vascular tissues of cotyledon and root. Mostly expressed in roots, at lower levels in leaves and petioles, and, to a lower extent, in stems, flowers and siliques.

It localises to the nucleus. Its function is as follows. Transcription factor involved in the regulation of osmotic stress responses and stomatal movement. Interacts specifically with the W box (5'-(T)TGAC[CT]-3'), a frequently occurring elicitor-responsive cis-acting element. Positive regulator of EDS1-dependent defense against E.amylovora. Together with WRKY70 and WRKY53, promotes resistance to P.syringae, probably by enhancing salicylic acid (SA)- dependent genes. Contributes to the suppression of jasmonic acid (MeJA)-induced expression of PDF1.2. Together with WRKY54 and WRKY70, promotes brassinosteroid (BR)-regulated plant growth but prevent drought response by modulating gene expression. This Arabidopsis thaliana (Mouse-ear cress) protein is Probable WRKY transcription factor 46 (WRKY46).